The primary structure comprises 596 residues: Aspartate--tRNA(Asp/Asn) ligase (596 aa).

Glu169 contributes to the L-aspartate binding site. Residues 193 to 196 form an aspartate region; sequence QLFK. Arg215 contacts L-aspartate. ATP contacts are provided by residues 215-217 and Gln224; that span reads RDE. L-aspartate is bound at residue His447. Glu481 is an ATP binding site. Arg488 serves as a coordination point for L-aspartate. An ATP-binding site is contributed by 533-536; the sequence is GWDR. Residues 559–596 form a disordered region; it reads GYDPLTQAPAPITAQQRKEAGVDFKPEAKKADPGATKA. Basic and acidic residues predominate over residues 574–590; that stretch reads QRKEAGVDFKPEAKKAD.

This sequence belongs to the class-II aminoacyl-tRNA synthetase family. Type 1 subfamily. As to quaternary structure, homodimer.

Its subcellular location is the cytoplasm. It carries out the reaction tRNA(Asx) + L-aspartate + ATP = L-aspartyl-tRNA(Asx) + AMP + diphosphate. Its function is as follows. Aspartyl-tRNA synthetase with relaxed tRNA specificity since it is able to aspartylate not only its cognate tRNA(Asp) but also tRNA(Asn). Reaction proceeds in two steps: L-aspartate is first activated by ATP to form Asp-AMP and then transferred to the acceptor end of tRNA(Asp/Asn). The sequence is that of Aspartate--tRNA(Asp/Asn) ligase from Arthrobacter sp. (strain FB24).